Here is a 149-residue protein sequence, read N- to C-terminus: Ribonuclease H (149 aa).

Residues 1–141 (MKTVTLFSDG…CDTMAREKAT (141 aa)) enclose the RNase H type-1 domain. Positions 9, 47, 69, and 133 each coordinate Mg(2+).

It belongs to the RNase H family. Monomer. The cofactor is Mg(2+).

It localises to the cytoplasm. It carries out the reaction Endonucleolytic cleavage to 5'-phosphomonoester.. Its function is as follows. Endonuclease that specifically degrades the RNA of RNA-DNA hybrids. The protein is Ribonuclease H of Campylobacter curvus (strain 525.92).